The following is a 433-amino-acid chain: Probable glycine dehydrogenase (decarboxylating) subunit 1 (433 aa).

The protein belongs to the GcvP family. N-terminal subunit subfamily. As to quaternary structure, the glycine cleavage system is composed of four proteins: P, T, L and H. In this organism, the P 'protein' is a heterodimer of two subunits.

It catalyses the reaction N(6)-[(R)-lipoyl]-L-lysyl-[glycine-cleavage complex H protein] + glycine + H(+) = N(6)-[(R)-S(8)-aminomethyldihydrolipoyl]-L-lysyl-[glycine-cleavage complex H protein] + CO2. In terms of biological role, the glycine cleavage system catalyzes the degradation of glycine. The P protein binds the alpha-amino group of glycine through its pyridoxal phosphate cofactor; CO(2) is released and the remaining methylamine moiety is then transferred to the lipoamide cofactor of the H protein. In Thermoplasma acidophilum (strain ATCC 25905 / DSM 1728 / JCM 9062 / NBRC 15155 / AMRC-C165), this protein is Probable glycine dehydrogenase (decarboxylating) subunit 1.